We begin with the raw amino-acid sequence, 369 residues long: S-(hydroxymethyl)glutathione dehydrogenase (369 aa).

7 residues coordinate Zn(2+): Cys40, His62, Cys92, Cys95, Cys98, Cys106, and Cys169.

It belongs to the zinc-containing alcohol dehydrogenase family. Class-III subfamily. As to quaternary structure, homodimer. The cofactor is Zn(2+).

The protein localises to the cytoplasm. The enzyme catalyses S-(hydroxymethyl)glutathione + NADP(+) = S-formylglutathione + NADPH + H(+). It catalyses the reaction S-(hydroxymethyl)glutathione + NAD(+) = S-formylglutathione + NADH + H(+). The catalysed reaction is a primary alcohol + NAD(+) = an aldehyde + NADH + H(+). It carries out the reaction a secondary alcohol + NAD(+) = a ketone + NADH + H(+). The enzyme catalyses S-nitrosoglutathione + NADH + H(+) = S-(hydroxysulfenamide)glutathione + NAD(+). Has high formaldehyde dehydrogenase activity in the presence of glutathione and catalyzes the oxidation of normal alcohols in a reaction that is not GSH-dependent. In addition, hemithiolacetals other than those formed from GSH, including omega-thiol fatty acids, also are substrates. Also acts as a S-nitroso-glutathione reductase by catalyzing the NADH-dependent reduction of S-nitrosoglutathione. This is S-(hydroxymethyl)glutathione dehydrogenase (frmA) from Synechocystis sp. (strain ATCC 27184 / PCC 6803 / Kazusa).